A 522-amino-acid chain; its full sequence is Maturase K (522 aa).

This sequence belongs to the intron maturase 2 family. MatK subfamily.

The protein localises to the plastid. The protein resides in the chloroplast. Usually encoded in the trnK tRNA gene intron. Probably assists in splicing its own and other chloroplast group II introns. This is Maturase K from Iris danfordiae (Danford iris).